The sequence spans 395 residues: Phosphopentomutase (395 aa).

Positions 16, 289, 294, 330, 331, and 342 each coordinate Mn(2+).

Belongs to the phosphopentomutase family. Mn(2+) is required as a cofactor.

It localises to the cytoplasm. It carries out the reaction 2-deoxy-alpha-D-ribose 1-phosphate = 2-deoxy-D-ribose 5-phosphate. It catalyses the reaction alpha-D-ribose 1-phosphate = D-ribose 5-phosphate. Its pathway is carbohydrate degradation; 2-deoxy-D-ribose 1-phosphate degradation; D-glyceraldehyde 3-phosphate and acetaldehyde from 2-deoxy-alpha-D-ribose 1-phosphate: step 1/2. In terms of biological role, isomerase that catalyzes the conversion of deoxy-ribose 1-phosphate (dRib-1-P) and ribose 1-phosphate (Rib-1-P) to deoxy-ribose 5-phosphate (dRib-5-P) and ribose 5-phosphate (Rib-5-P), respectively. The polypeptide is Phosphopentomutase (Geobacillus kaustophilus (strain HTA426)).